Reading from the N-terminus, the 327-residue chain is 2-phosphoglycerate kinase (327 aa).

Residues 1 to 20 (MSEKSSRKERDEKTEKETAR) show a composition bias toward basic and acidic residues. The disordered stretch occupies residues 1-27 (MSEKSSRKERDEKTEKETARQGKHRRI). An ATP-cone domain is found at 25-111 (RRIRVKSRHY…LWRRIKKREE (87 aa)).

Belongs to the 2-phosphoglycerate kinase family. It depends on a divalent metal cation as a cofactor.

The enzyme catalyses (2R)-2-phosphoglycerate + ATP = (2R)-2,3-bisphosphoglycerate + ADP + H(+). It functions in the pathway thermoadapter biosynthesis; cyclic 2,3-diphosphoglycerate biosynthesis; cyclic 2,3-diphosphoglycerate from 2-phospho-D-glycerate: step 1/2. In terms of biological role, catalyzes the phosphorylation of 2-phosphoglycerate to 2,3-diphosphoglycerate. Involved in the biosynthesis of cyclic 2,3-bisphosphoglycerate, a thermoprotectant. The chain is 2-phosphoglycerate kinase from Methanopyrus kandleri (strain AV19 / DSM 6324 / JCM 9639 / NBRC 100938).